We begin with the raw amino-acid sequence, 78 residues long: D-alanyl carrier protein (78 aa).

Residues 1–78 (MNIQETVLNI…QIIQQVEALQ (78 aa)) enclose the Carrier domain. Ser36 is subject to O-(pantetheine 4'-phosphoryl)serine.

The protein belongs to the DltC family. Post-translationally, 4'-phosphopantetheine is transferred from CoA to a specific serine of apo-DCP.

It is found in the cytoplasm. It functions in the pathway cell wall biogenesis; lipoteichoic acid biosynthesis. Functionally, carrier protein involved in the D-alanylation of lipoteichoic acid (LTA). The loading of thioester-linked D-alanine onto DltC is catalyzed by D-alanine--D-alanyl carrier protein ligase DltA. The DltC-carried D-alanyl group is further transferred to cell membrane phosphatidylglycerol (PG) by forming an ester bond, probably catalyzed by DltD. D-alanylation of LTA plays an important role in modulating the properties of the cell wall in Gram-positive bacteria, influencing the net charge of the cell wall. The protein is D-alanyl carrier protein of Enterococcus faecalis (strain ATCC 700802 / V583).